Here is a 77-residue protein sequence, read N- to C-terminus: uncharacterized protein (77 aa).

The tract at residues 53-77 (KRVSSEANKEKSDITELLRKQVRPD) is disordered.

This is an uncharacterized protein from Escherichia coli (strain K12).